A 537-amino-acid chain; its full sequence is Zinc finger and BTB domain-containing protein 18 (537 aa).

The region spanning 24–91 (CDSTVLVGDA…MYEGKLQFKS (68 aa)) is the BTB domain. Residues 122 to 143 (TAEADSTKREEDTSSCSDKVES) show a composition bias toward basic and acidic residues. Disordered regions lie at residues 122-232 (TAEA…RVSA) and 335-355 (ASEL…LGGD). Composition is skewed to low complexity over residues 182–195 (RLPS…TTSP) and 208–229 (SPAG…ASRR). 4 consecutive C2H2-type zinc fingers follow at residues 385–407 (FMCP…LSTH), 425–447 (PTCS…ERTH), 453–475 (YTCT…AVVH), and 481–504 (HACK…RKFH).

Belongs to the krueppel C2H2-type zinc-finger protein family. ZBTB18 subfamily.

The protein localises to the nucleus. Functionally, transcriptional repressor that plays a role in various developmental processes. Specifically binds the consensus DNA sequence 5'-[AC]ACATCTG[GT][AC]-3' which contains the E box core, and acts by recruiting chromatin remodeling multiprotein complexes. This chain is Zinc finger and BTB domain-containing protein 18 (zbtb18), found in Danio rerio (Zebrafish).